Here is a 156-residue protein sequence, read N- to C-terminus: Ribosomal RNA large subunit methyltransferase H (156 aa).

S-adenosyl-L-methionine-binding positions include Leu73, Gly104, and 123–128 (LSSLTL).

Belongs to the RNA methyltransferase RlmH family. In terms of assembly, homodimer.

It is found in the cytoplasm. It catalyses the reaction pseudouridine(1915) in 23S rRNA + S-adenosyl-L-methionine = N(3)-methylpseudouridine(1915) in 23S rRNA + S-adenosyl-L-homocysteine + H(+). Its function is as follows. Specifically methylates the pseudouridine at position 1915 (m3Psi1915) in 23S rRNA. The polypeptide is Ribosomal RNA large subunit methyltransferase H (Bordetella avium (strain 197N)).